Here is a 456-residue protein sequence, read N- to C-terminus: ATP synthase subunit beta 1 (456 aa).

152–159 is a binding site for ATP; that stretch reads GGAGVGKS.

Belongs to the ATPase alpha/beta chains family. In terms of assembly, F-type ATPases have 2 components, CF(1) - the catalytic core - and CF(0) - the membrane proton channel. CF(1) has five subunits: alpha(3), beta(3), gamma(1), delta(1), epsilon(1). CF(0) has three main subunits: a(1), b(2) and c(9-12). The alpha and beta chains form an alternating ring which encloses part of the gamma chain. CF(1) is attached to CF(0) by a central stalk formed by the gamma and epsilon chains, while a peripheral stalk is formed by the delta and b chains.

The protein localises to the cell membrane. The catalysed reaction is ATP + H2O + 4 H(+)(in) = ADP + phosphate + 5 H(+)(out). Functionally, produces ATP from ADP in the presence of a proton gradient across the membrane. The catalytic sites are hosted primarily by the beta subunits. This chain is ATP synthase subunit beta 1, found in Listeria monocytogenes serotype 4b (strain F2365).